A 241-amino-acid chain; its full sequence is MSFSSILSQDITDDITPPAYSATLGSREQIVFRAYQNEPWLAGTASNLILDKKLVIVDRELLFQVLMVENITKSKLTQIDDIKTKLDPKKQKVDRLRSGAQGNGAKKYEVITQVDMEDDGNVADNNCAKENNSNNNSSAAKNKAVFKLTLQSKSGDVFFAINSTPISWSSCMLGSKIVILPGTVFNRGVFILKDSQVIFLGGINRVWNENRDQKFCDYLESKLQRDKQLVNGGSKKRKAND.

The protein belongs to the RMI1 family. Forms a complex with SGS1 and TOP3.

It is found in the cytoplasm. The protein resides in the nucleus. Its function is as follows. Structure-specific DNA-binding protein with a preference for cruciform structures. Also binds single-stranded DNA (ssDNA). Functions together with SGS1 and TOP3 to maintain genome integrity. Essential for proper meiotic cell division. Required for normal S-phase progression and DNA damage response. Required for resistance to the DNA-damaging agent methyl methanesulfonate (MMS). This chain is RecQ-mediated genome instability protein 1, found in Saccharomyces cerevisiae (strain ATCC 204508 / S288c) (Baker's yeast).